The following is a 164-amino-acid chain: HTH-type transcriptional regulator IscR (164 aa).

The region spanning 2–131 (RLTSKGRYAV…NNITLGELVN (130 aa)) is the HTH rrf2-type domain. A DNA-binding region (H-T-H motif) is located at residues 28-51 (LADISERQGISLSYLEQLFSRLRK). [2Fe-2S] cluster is bound by residues Cys-92, Cys-98, and Cys-104.

The cofactor is [2Fe-2S] cluster.

Its function is as follows. Regulates the transcription of several operons and genes involved in the biogenesis of Fe-S clusters and Fe-S-containing proteins. In Salmonella choleraesuis (strain SC-B67), this protein is HTH-type transcriptional regulator IscR.